Here is a 129-residue protein sequence, read N- to C-terminus: Glycerol-3-phosphate cytidylyltransferase (129 aa).

Residues 9-10 and 14-17 contribute to the CTP site; these read TF and HYGH. Lys-44 provides a ligand contact to substrate. CTP is bound at residue Lys-46. Lys-77 contacts substrate. 113–120 contributes to the CTP binding site; the sequence is RTDGISTT.

Belongs to the cytidylyltransferase family. In terms of assembly, homodimer.

It is found in the cytoplasm. The catalysed reaction is sn-glycerol 3-phosphate + CTP + H(+) = CDP-glycerol + diphosphate. It functions in the pathway cell wall biogenesis; poly(ribitol phosphate) teichoic acid biosynthesis. Its function is as follows. Catalyzes the transfer of the cytidylyl group of CTP to sn-glycerol 3-phosphate so the activated glycerol 3-phosphate can be used for teichoic acid synthesis, via incorporation into both the linkage unit by TarB and TarF. The protein is Glycerol-3-phosphate cytidylyltransferase (tarD) of Bacillus spizizenii (strain ATCC 23059 / NRRL B-14472 / W23) (Bacillus subtilis subsp. spizizenii).